Here is a 514-residue protein sequence, read N- to C-terminus: DNA damage-binding protein CMR1 (514 aa).

The tract at residues 26 to 116 (NLDSLSQSIK…VKQEEKEELS (91 aa)) is disordered. Residues 34-44 (IKRELPRASET) show a composition bias toward basic and acidic residues. Residues 45–55 (KKRKTTPRTKA) show a composition bias toward basic residues. Composition is skewed to basic and acidic residues over residues 56–65 (VKKEDVEPSR) and 92–116 (KFED…EELS). 7 WD repeats span residues 180 to 221 (ISHT…DDSE), 229 to 269 (PHGK…STEV), 280 to 320 (DYAL…KPLK), 327 to 367 (LHDK…KANA), 385 to 423 (SSRL…LIPD), 438 to 481 (GRWV…IAHL), and 483 to 514 (DSVG…YLFE).

Belongs to the WD repeat DDB2/WDR76 family.

In terms of biological role, DNA-binding protein that binds to both single- and double-stranded DNA. Binds preferentially to UV-damaged DNA. May be involved in DNA-metabolic processes. This chain is DNA damage-binding protein CMR1 (PRW1), found in Scheffersomyces stipitis (strain ATCC 58785 / CBS 6054 / NBRC 10063 / NRRL Y-11545) (Yeast).